The sequence spans 208 residues: Large ribosomal subunit protein uL4 (208 aa).

The segment at 44–79 is disordered; it reads QRQGTHKSKERSEISGSTRKIGRQKGGGGARRGDMN.

The protein belongs to the universal ribosomal protein uL4 family. Part of the 50S ribosomal subunit.

Its function is as follows. One of the primary rRNA binding proteins, this protein initially binds near the 5'-end of the 23S rRNA. It is important during the early stages of 50S assembly. It makes multiple contacts with different domains of the 23S rRNA in the assembled 50S subunit and ribosome. Functionally, forms part of the polypeptide exit tunnel. The chain is Large ribosomal subunit protein uL4 from Bacteroides fragilis (strain YCH46).